The primary structure comprises 564 residues: MKRLNERSRMVTEGVARAPNRSMYYAMGYEEKDFVKPMVGVANGHSTITPCNSGLQKLADAAVEALEAAGAKAQVFGTPTVSDGIGMGTEGMKYSLVSREVIADSIEVCVNGLWQDGVVVIGGCDKNMPGGMMALARTNVPGIYVYGGTIKPGHFKGKELNIVSAFEAVGEFTSGRLSEEDLKGVEQHACPGSGSCGGMYTANTMSSSFEALGMSLPYSSTMANVDAEKVASAAESARVLVEAVKNNLRPRDIITKKSVENAVSVIMAVGGSTNAVLHFLAITSAAEIDWTIDDFERIRKQVPVIVDMKPSGTYLATDLHQAGGIPQVMKILLDGGLLHGDCITITGKTIAEVLKDVPSVPRADQKVIRTLDNPLYKQGHLAILKGNISPEGCVAKITGLKNPSITGPARVFDSEDDAMAAIMAQKIKDGDIVVIRYEGPKGGPGMREMLAPTSALVGQGLGESVGLITDGRFSGGTWGMVVGHVAPEAFVGGTIALINEGDSVTIDAHQLLIQLNVSEEEIAKRRAAWKQPKPRYTRGLLAKYASLASSASKGAVTDLNLDLT.

Position 51 (cysteine 51) interacts with [2Fe-2S] cluster. Aspartate 83 is a binding site for Mg(2+). Cysteine 124 provides a ligand contact to [2Fe-2S] cluster. Aspartate 125 and lysine 126 together coordinate Mg(2+). Lysine 126 is modified (N6-carboxylysine). Position 196 (cysteine 196) interacts with [2Fe-2S] cluster. Position 448 (glutamate 448) interacts with Mg(2+). Residue serine 474 is the Proton acceptor of the active site.

This sequence belongs to the IlvD/Edd family. As to quaternary structure, homodimer. It depends on [2Fe-2S] cluster as a cofactor. The cofactor is Mg(2+).

It catalyses the reaction (2R)-2,3-dihydroxy-3-methylbutanoate = 3-methyl-2-oxobutanoate + H2O. It carries out the reaction (2R,3R)-2,3-dihydroxy-3-methylpentanoate = (S)-3-methyl-2-oxopentanoate + H2O. It functions in the pathway amino-acid biosynthesis; L-isoleucine biosynthesis; L-isoleucine from 2-oxobutanoate: step 3/4. Its pathway is amino-acid biosynthesis; L-valine biosynthesis; L-valine from pyruvate: step 3/4. In terms of biological role, functions in the biosynthesis of branched-chain amino acids. Catalyzes the dehydration of (2R,3R)-2,3-dihydroxy-3-methylpentanoate (2,3-dihydroxy-3-methylvalerate) into 2-oxo-3-methylpentanoate (2-oxo-3-methylvalerate) and of (2R)-2,3-dihydroxy-3-methylbutanoate (2,3-dihydroxyisovalerate) into 2-oxo-3-methylbutanoate (2-oxoisovalerate), the penultimate precursor to L-isoleucine and L-valine, respectively. The sequence is that of Dihydroxy-acid dehydratase from Polynucleobacter asymbioticus (strain DSM 18221 / CIP 109841 / QLW-P1DMWA-1) (Polynucleobacter necessarius subsp. asymbioticus).